A 928-amino-acid chain; its full sequence is Nuclear pore complex-interacting protein family member B12 (928 aa).

The chain crosses the membrane as a helical span at residues 73–93; it reads VVITLWIVYLWVSLLKTIFWS. 2 disordered regions span residues 242-452 and 663-928; these read RMGH…NIKT and ERLR…RRLS. Polar residues predominate over residues 252–263; sequence QQHSITDNSLSL. The segment covering 349-359 has biased composition (pro residues); sequence PLPPSAPPSAP. 4 stretches are compositionally biased toward basic and acidic residues: residues 406-416, 698-708, 740-750, and 782-792; these read DNIKTPAERLR.

The protein belongs to the NPIP family.

It localises to the membrane. The polypeptide is Nuclear pore complex-interacting protein family member B12 (Homo sapiens (Human)).